We begin with the raw amino-acid sequence, 495 residues long: Cysteine--tRNA ligase (495 aa).

Cys-35 contributes to the Zn(2+) binding site. A 'HIGH' region motif is present at residues 37-47 (PTVYSNVHLGN). The Zn(2+) site is built by Cys-230, His-255, and Glu-259. Positions 287–291 (KMSKS) match the 'KMSKS' region motif. Lys-290 contributes to the ATP binding site.

This sequence belongs to the class-I aminoacyl-tRNA synthetase family. Monomer. Zn(2+) is required as a cofactor.

It is found in the cytoplasm. It carries out the reaction tRNA(Cys) + L-cysteine + ATP = L-cysteinyl-tRNA(Cys) + AMP + diphosphate. In Flavobacterium psychrophilum (strain ATCC 49511 / DSM 21280 / CIP 103535 / JIP02/86), this protein is Cysteine--tRNA ligase.